Here is a 367-residue protein sequence, read N- to C-terminus: NADH-quinone oxidoreductase subunit D (367 aa).

The protein belongs to the complex I 49 kDa subunit family. NDH-1 is composed of 14 different subunits. Subunits NuoB, C, D, E, F, and G constitute the peripheral sector of the complex.

It localises to the cell membrane. It carries out the reaction a quinone + NADH + 5 H(+)(in) = a quinol + NAD(+) + 4 H(+)(out). Its function is as follows. NDH-1 shuttles electrons from NADH, via FMN and iron-sulfur (Fe-S) centers, to quinones in the respiratory chain. The immediate electron acceptor for the enzyme in this species is believed to be a menaquinone. Couples the redox reaction to proton translocation (for every two electrons transferred, four hydrogen ions are translocated across the cytoplasmic membrane), and thus conserves the redox energy in a proton gradient. The polypeptide is NADH-quinone oxidoreductase subunit D (Geobacillus kaustophilus (strain HTA426)).